A 138-amino-acid chain; its full sequence is Small ribosomal subunit protein uS9c (138 aa).

The protein belongs to the universal ribosomal protein uS9 family.

It is found in the plastid. It localises to the chloroplast. This chain is Small ribosomal subunit protein uS9c (rps9), found in Trieres chinensis (Marine centric diatom).